The sequence spans 252 residues: Chitooligosaccharide deacetylase (252 aa).

Residues His-61 and His-125 each contribute to the Mg(2+) site.

This sequence belongs to the YdjC deacetylase family. ChbG subfamily. In terms of assembly, homodimer. Requires Mg(2+) as cofactor.

It is found in the cytoplasm. It catalyses the reaction N,N'-diacetylchitobiose + H2O = N-acetyl-beta-D-glucosaminyl-(1-&gt;4)-D-glucosamine + acetate. It carries out the reaction diacetylchitobiose-6'-phosphate + H2O = N'-monoacetylchitobiose-6'-phosphate + acetate. It functions in the pathway glycan degradation; chitin degradation. In terms of biological role, involved in the degradation of chitin. ChbG is essential for growth on the acetylated chitooligosaccharides chitobiose and chitotriose but is dispensable for growth on cellobiose and chitosan dimer, the deacetylated form of chitobiose. Deacetylation of chitobiose-6-P and chitotriose-6-P is necessary for both the activation of the chb promoter by the regulatory protein ChbR and the hydrolysis of phosphorylated beta-glucosides by the phospho-beta-glucosidase ChbF. Catalyzes the removal of only one acetyl group from chitobiose-6-P to yield monoacetylchitobiose-6-P, the inducer of ChbR and the substrate of ChbF. This Salmonella paratyphi A (strain ATCC 9150 / SARB42) protein is Chitooligosaccharide deacetylase.